A 230-amino-acid chain; its full sequence is Large ribosomal subunit protein uL1 (230 aa).

Belongs to the universal ribosomal protein uL1 family. Part of the 50S ribosomal subunit.

Binds directly to 23S rRNA. The L1 stalk is quite mobile in the ribosome, and is involved in E site tRNA release. Functionally, protein L1 is also a translational repressor protein, it controls the translation of the L11 operon by binding to its mRNA. The chain is Large ribosomal subunit protein uL1 from Leptospira interrogans serogroup Icterohaemorrhagiae serovar copenhageni (strain Fiocruz L1-130).